A 335-amino-acid chain; its full sequence is Endo-1,4-beta-xylanase S20 (335 aa).

The first 22 residues, 1 to 22 (MLRKLVTGALAAALLLSGQSNA), serve as a signal peptide directing secretion. The GH11 domain maps to 39–241 (NNKNETGNGN…GSGYVDFTYA (203 aa)). 2 N-linked (GlcNAc...) asparagine glycosylation sites follow: asparagine 42 and asparagine 78. Glutamate 134 serves as the catalytic Nucleophile. The N-linked (GlcNAc...) asparagine glycan is linked to asparagine 202. Glutamate 228 serves as the catalytic Proton donor. An N-linked (GlcNAc...) asparagine glycan is attached at asparagine 251. The tract at residues 251–291 (NASAPSNNNNNNNNNNDNNGNWNNWNNNNNNNNNNNNNNNN) is disordered. The segment covering 257-291 (NNNNNNNNNNDNNGNWNNWNNNNNNNNNNNNNNNN) has biased composition (low complexity). A CBM1 domain is found at 300-335 (NCAAIWGQCGGSGYNGPKCCKQGSCKQINQWYSQCQ).

This sequence belongs to the glycosyl hydrolase 11 (cellulase G) family.

Its subcellular location is the secreted. The catalysed reaction is Endohydrolysis of (1-&gt;4)-beta-D-xylosidic linkages in xylans.. It functions in the pathway glycan degradation; xylan degradation. Endo-1,4-beta-xylanase involved in the hydrolysis of xylan, a major structural heterogeneous polysaccharide found in plant biomass representing the second most abundant polysaccharide in the biosphere, after cellulose. This is Endo-1,4-beta-xylanase S20 (xynS20) from Neocallimastix patriciarum (Rumen fungus).